The sequence spans 155 residues: DNA gyrase inhibitor (155 aa).

It belongs to the DNA gyrase inhibitor family. In terms of assembly, interacts with DNA gyrase.

It localises to the cytoplasm. Inhibits the supercoiling activity of DNA gyrase. Acts by inhibiting DNA gyrase at an early step, prior to (or at the step of) binding of DNA by the gyrase. It protects cells against toxins that target DNA gyrase, by inhibiting activity of these toxins and reducing the formation of lethal double-strand breaks in the cell. The polypeptide is DNA gyrase inhibitor (Citrobacter koseri (strain ATCC BAA-895 / CDC 4225-83 / SGSC4696)).